A 155-amino-acid polypeptide reads, in one-letter code: Small ribosomal subunit protein uS7 (155 aa).

It belongs to the universal ribosomal protein uS7 family. In terms of assembly, part of the 30S ribosomal subunit. Contacts proteins S9 and S11.

One of the primary rRNA binding proteins, it binds directly to 16S rRNA where it nucleates assembly of the head domain of the 30S subunit. Is located at the subunit interface close to the decoding center, probably blocks exit of the E-site tRNA. The polypeptide is Small ribosomal subunit protein uS7 (Chlorobium luteolum (strain DSM 273 / BCRC 81028 / 2530) (Pelodictyon luteolum)).